Consider the following 495-residue polypeptide: Acetyl-coenzyme A carboxylase carboxyl transferase subunit beta, chloroplastic (495 aa).

The tract at residues 188-208 is disordered; that stretch reads SRNSSENEGSSRRTRTKGSDL. The region spanning 226–495 is the CoA carboxyltransferase N-terminal domain; that stretch reads LWVQCENCYG…PLNQKSSKIK (270 aa). 4 residues coordinate Zn(2+): Cys230, Cys233, Cys249, and Cys252. Residues 230–252 form a C4-type zinc finger; it reads CENCYGLNYKKFFKSKMNICEQC.

The protein belongs to the AccD/PCCB family. As to quaternary structure, acetyl-CoA carboxylase is a heterohexamer composed of biotin carboxyl carrier protein, biotin carboxylase and 2 subunits each of ACCase subunit alpha and ACCase plastid-coded subunit beta (accD). Requires Zn(2+) as cofactor.

The protein resides in the plastid. The protein localises to the chloroplast stroma. The enzyme catalyses N(6)-carboxybiotinyl-L-lysyl-[protein] + acetyl-CoA = N(6)-biotinyl-L-lysyl-[protein] + malonyl-CoA. It participates in lipid metabolism; malonyl-CoA biosynthesis; malonyl-CoA from acetyl-CoA: step 1/1. Its function is as follows. Component of the acetyl coenzyme A carboxylase (ACC) complex. Biotin carboxylase (BC) catalyzes the carboxylation of biotin on its carrier protein (BCCP) and then the CO(2) group is transferred by the transcarboxylase to acetyl-CoA to form malonyl-CoA. The sequence is that of Acetyl-coenzyme A carboxylase carboxyl transferase subunit beta, chloroplastic from Nicotiana tomentosiformis (Tobacco).